A 743-amino-acid polypeptide reads, in one-letter code: 1,4-alpha-glucan branching enzyme GlgB (743 aa).

Aspartate 416 (nucleophile) is an active-site residue. Residue glutamate 469 is the Proton donor of the active site.

Belongs to the glycosyl hydrolase 13 family. GlgB subfamily. In terms of assembly, monomer.

It carries out the reaction Transfers a segment of a (1-&gt;4)-alpha-D-glucan chain to a primary hydroxy group in a similar glucan chain.. It participates in glycan biosynthesis; glycogen biosynthesis. Functionally, catalyzes the formation of the alpha-1,6-glucosidic linkages in glycogen by scission of a 1,4-alpha-linked oligosaccharide from growing alpha-1,4-glucan chains and the subsequent attachment of the oligosaccharide to the alpha-1,6 position. This chain is 1,4-alpha-glucan branching enzyme GlgB, found in Shewanella baltica (strain OS195).